A 440-amino-acid polypeptide reads, in one-letter code: Chromosome partition protein MukF (440 aa).

The interval 208-236 (LSETSGTLRELQDTLEAAGDKLQANLLRI) is leucine-zipper.

This sequence belongs to the MukF family. As to quaternary structure, interacts, and probably forms a ternary complex, with MukE and MukB via its C-terminal region. The complex formation is stimulated by calcium or magnesium. It is required for an interaction between MukE and MukB.

The protein resides in the cytoplasm. It localises to the nucleoid. Functionally, involved in chromosome condensation, segregation and cell cycle progression. May participate in facilitating chromosome segregation by condensation DNA from both sides of a centrally located replisome during cell division. Not required for mini-F plasmid partitioning. Probably acts via its interaction with MukB and MukE. Overexpression results in anucleate cells. It has a calcium binding activity. The protein is Chromosome partition protein MukF of Edwardsiella ictaluri (strain 93-146).